Here is a 290-residue protein sequence, read N- to C-terminus: Protease HtpX homolog (290 aa).

A run of 2 helical transmembrane segments spans residues isoleucine 4–leucine 24 and proline 39–isoleucine 59. Residue histidine 144 participates in Zn(2+) binding. Glutamate 145 is an active-site residue. Residue histidine 148 coordinates Zn(2+). The next 2 helical transmembrane spans lie at leucine 159 to valine 179 and isoleucine 197 to phenylalanine 217. Glutamate 222 provides a ligand contact to Zn(2+).

The protein belongs to the peptidase M48B family. Requires Zn(2+) as cofactor.

It is found in the cell inner membrane. This chain is Protease HtpX homolog, found in Janthinobacterium sp. (strain Marseille) (Minibacterium massiliensis).